The following is a 419-amino-acid chain: UDP-N-acetylglucosamine 1-carboxyvinyltransferase (419 aa).

22–23 (KN) contacts phosphoenolpyruvate. Position 95 (arginine 95) interacts with UDP-N-acetyl-alpha-D-glucosamine. The Proton donor role is filled by cysteine 119. A 2-(S-cysteinyl)pyruvic acid O-phosphothioketal modification is found at cysteine 119. Residues 164-167 (KVSV), aspartate 308, and isoleucine 330 each bind UDP-N-acetyl-alpha-D-glucosamine.

The protein belongs to the EPSP synthase family. MurA subfamily.

The protein resides in the cytoplasm. It catalyses the reaction phosphoenolpyruvate + UDP-N-acetyl-alpha-D-glucosamine = UDP-N-acetyl-3-O-(1-carboxyvinyl)-alpha-D-glucosamine + phosphate. The protein operates within cell wall biogenesis; peptidoglycan biosynthesis. Its function is as follows. Cell wall formation. Adds enolpyruvyl to UDP-N-acetylglucosamine. The sequence is that of UDP-N-acetylglucosamine 1-carboxyvinyltransferase from Rickettsia akari (strain Hartford).